A 142-amino-acid chain; its full sequence is Hemoglobin subunit alpha-2 (142 aa).

The 141-residue stretch at 2–142 (VLSPADKTNV…VSTVLTSKYR (141 aa)) folds into the Globin domain. An O2-binding site is contributed by His-59. His-88 lines the heme b pocket.

It belongs to the globin family. As to quaternary structure, heterotetramer of two alpha chains and two beta chains. Red blood cells.

Involved in oxygen transport from the lung to the various peripheral tissues. In terms of biological role, hemopressin acts as an antagonist peptide of the cannabinoid receptor CNR1. Hemopressin-binding efficiently blocks cannabinoid receptor CNR1 and subsequent signaling. This chain is Hemoglobin subunit alpha-2 (HBA2), found in Hylobates lar (Lar gibbon).